The following is a 492-amino-acid chain: Alpha/beta hydrolase ucsC (492 aa).

The active-site Nucleophile is Ser-258.

Belongs to the AB hydrolase superfamily. FUS2 hydrolase family. Homodimer.

It participates in mycotoxin biosynthesis. Functionally, alpha/beta hydrolase; part of the gene cluster that mediates the biosynthesis of UCS1025A, a member of the pyrrolizidinone family that acts as a strong telomerase inhibitor and displays potent antibacterial and antitumor properties. These compounds share a hemiaminal-containing pyrrolizidinone core fused with a gamma-lactone, giving a furopyrrolizidine that is connected to a decalin fragment. The polyketide synthase module (PKS) of the PKS-NRPS ucsA is responsible for the synthesis of the polyketide backbone via the condensation of an acetyl-CoA starter unit with 6 malonyl-CoA units. The downstream nonribosomal peptide synthetase (NRPS) module then amidates the carboxyl end of the polyketide with a 2S,3S-methylproline derived from L-isoleucine by the 2-oxoglutarate-dependent dioxygenase ucsF which converts L-isoleucine to (4S,5S)-4-methylpyrroline-5-carboxylate that is further converted to 2S,3S-methylproline by the pyrroline-5-carboxylate reductase ucsG. Reductive release of the completed aminoacyl polyketide from the assembly line can form the 3-pyrrolin-2-one structure via an intramolecular Knoevenagel reaction. Because ucsA lacks a designated enoylreductase (ER) domain, the required activity is provided the enoyl reductase ucsL. This keto acyclic precursor is the substrate of the Diels-Alderase ucsH, that catalyzes the Diels-Alder cycloaddition. Oxidation of the 3S-methyl group to a carboxylate by the cytochrome P450 monooxygenase ucsK allows an oxa-Michael cyclization that might involve the reductase/dehydrogenase ucsI and which furnishes the furopyrrolizidine. The oxidase ucsJ likely plays a critical role in stereoselective reduction of the C5-C6 double bond to afford the required R-configured carboxylate group. Further enolization and oxidation at C5 by an unidentified enzyme affords the last intermediate that can undergo oxa-Michael cyclization to yield UCS1025A. This is Alpha/beta hydrolase ucsC from Acremonium sp.